We begin with the raw amino-acid sequence, 215 residues long: Probable phosphoglycerate mutase GpmB (215 aa).

Substrate-binding positions include 8-15 (RHGETQWN), 21-22 (QG), arginine 58, lysine 60, 82-85 (ELDM), 104-105 (RR), and 151-152 (GI). Residue histidine 9 is the Tele-phosphohistidine intermediate of the active site. Catalysis depends on glutamate 82, which acts as the Proton donor/acceptor.

The protein belongs to the phosphoglycerate mutase family. GpmB subfamily.

The enzyme catalyses (2R)-2-phosphoglycerate = (2R)-3-phosphoglycerate. It participates in carbohydrate degradation; glycolysis; pyruvate from D-glyceraldehyde 3-phosphate: step 3/5. This is Probable phosphoglycerate mutase GpmB from Salmonella paratyphi A (strain AKU_12601).